We begin with the raw amino-acid sequence, 398 residues long: MSKIIDEILSSLSRSRIFRNRELLLPDYVPEELPHREEQIKRLVEILSPLMRGEKPNNIFIYGLTGTGKTAVTKFVVKKLHEKISNSFIYVYINTRQTDTPYRILADLLENLGSKVPFTGISTAELYRRFIKKVLELKPILVIVLDEIDALVKKHGDDILYRLTRANYEMGKSKVSIIGITNDIKFVEFLDPRVKSSLSEEEIVFPPYNAEELEDILKRRATLAFYDSVVSDDVIKLCAAIAARDHGDARRALDLLRVAGEVAERDGAEKLTIEHVNKARVEIERDRVYEVVSTLPFHSKLVLLAIVIGVNEKRRTLTTGEVYDVYTKLAKKIGVESVTQRRVSDIINELDMLGIITARVVNRGRYGKTKEVNLAVNEETVIKAISEKDSKIASLWDR.

ATP-binding positions include 67–71 (TGKTA), Tyr208, and Arg220.

It belongs to the CDC6/cdc18 family.

Its function is as follows. Involved in regulation of DNA replication. In Sulfurisphaera tokodaii (strain DSM 16993 / JCM 10545 / NBRC 100140 / 7) (Sulfolobus tokodaii), this protein is ORC1-type DNA replication protein 1 (cdc6-1).